The following is a 219-amino-acid chain: ATP synthase protein MI25 (219 aa).

A helical transmembrane segment spans residues 29 to 49 (ISIYNEEMIVARCFIGFLILS).

Belongs to the ATPase protein MI25 family. As to quaternary structure, F-type ATPases have 2 components, CF(1) - the catalytic core - and CF(0) - the membrane proton channel. CF(1) has five subunits: alpha(3), beta(3), gamma(1), delta(1), epsilon(1). CF(0) has three main subunits: a, b and c.

The protein resides in the mitochondrion membrane. In terms of biological role, this is one of the chains of the nonenzymatic component (CF(0) subunit) of the mitochondrial ATPase complex. The sequence is that of ATP synthase protein MI25 from Zea mays (Maize).